The chain runs to 649 residues: MADDSGTENEGSGCTGWFMVEAIVQHPTGTQISDDEDEEVEDSGYDMVDFIDDSNITHNSLEAQALFNRQEADTHYATVQDLKRKYLGSPYVSPINTIAEAVESEISPRLDAIKLTRQPKKVKRRLFQTRELTDSGYGYSEVEAGTGTQVEKHGVPENGGDGQEKDTGRDIEGEEHTEAEAPTNSVREHAGTAGILELLKCKDLRAALLGKFKECFGLSFIDLIRPFKSDKTTCLDWVVAGFGIHHSISEAFQKLIEPLSLYAHIQWLTNAWGMVLLVLLRFKVNKSRSTVARTLATLLNIPENQMLIEPPKIQSGVAALYWFRTGISNASTVIGEAPEWITRQTVIEHGLADSQFKLTEMVQWAYDNDICEESEIAFEYAQRGDFDSNARAFLNSNMQAKYVKDCATMCRHYKHAEMRKMSIKQWIKHRGSKIEGTGNWKPIVQFLRHQNIEFIPFLTKFKLWLHGTPKKNCIAIVGPPDTGKSYFCMSLISFLGGTVISHVNSSSHFWLQPLVDAKVALLDDATQPCWIYMDTYMRNLLDGNPMSIDRKHKALTLIKCPPLLVTSNIDITKEDKYKYLHTRVTTFTFPNPFPFDRNGNAVYELSNTNWKCFFERLSSSLDIQDSEDEEDGSNSQAFRCVPGTVVRTL.

The Nuclear localization signal signature appears at 83 to 85 (KRK). A phosphoserine; by host mark is found at Ser89, Ser93, and Ser107. A Nuclear export signal motif is present at residues 106–115 (ISPRLDAIKL). The segment at 138 to 169 (GYSEVEAGTGTQVEKHGVPENGGDGQEKDTGR) is disordered. Residues 187–353 (REHAGTAGIL…QTVIEHGLAD (167 aa)) are DNA-binding region. The region spanning 452–602 (IEFIPFLTKF…FPFDRNGNAV (151 aa)) is the SF3 helicase domain. 478-485 (GPPDTGKS) provides a ligand contact to ATP. Lys559 participates in a covalent cross-link: Glycyl lysine isopeptide (Lys-Gly) (interchain with G-Cter in SUMO).

The protein belongs to the papillomaviridae E1 protein family. Can form hexamers. Interacts with E2 protein; this interaction increases E1 DNA binding specificity. Interacts with host DNA polymerase subunit POLA2. Interacts with host single stranded DNA-binding protein RPA1. Interacts with host TOP1; this interaction stimulates the enzymatic activity of TOP1. Phosphorylated. In terms of processing, sumoylated.

It is found in the host nucleus. The catalysed reaction is Couples ATP hydrolysis with the unwinding of duplex DNA by translocating in the 3'-5' direction.. The enzyme catalyses ATP + H2O = ADP + phosphate + H(+). Its function is as follows. ATP-dependent DNA 3'-5' helicase required for initiation of viral DNA replication. It forms a complex with the viral E2 protein. The E1-E2 complex binds to the replication origin which contains binding sites for both proteins. During the initial step, a dimer of E1 interacts with a dimer of protein E2 leading to a complex that binds the viral origin of replication with high specificity. Then, a second dimer of E1 displaces the E2 dimer in an ATP-dependent manner to form the E1 tetramer. Following this, two E1 monomers are added to each half of the site, which results in the formation of two E1 trimers on the viral ori. Subsequently, two hexamers will be created. The double hexamer acts as a bi-directional helicase machinery and unwinds the viral DNA and then recruits the host DNA polymerase to start replication. The polypeptide is Replication protein E1 (Homo sapiens (Human)).